Consider the following 315-residue polypeptide: Cysteine proteinase 2 (315 aa).

The N-terminal stretch at 1 to 13 (MFAFICLLAIASA) is a signal peptide. The propeptide at 14-93 (IDFNTWASKN…NGQVKYLNIQ (80 aa)) is activation peptide. Cystine bridges form between Cys-115–Cys-161 and Cys-152–Cys-193. The active site involves Cys-118. Active-site residues include His-259 and Asn-279.

Belongs to the peptidase C1 family. As to quaternary structure, interacts with cysteine protease inhibitor ICP1. Interacts with cysteine protease inhibitor ICP2.

The protein resides in the cell membrane. It localises to the cytoplasmic vesicle. It is found in the phagosome. The protein localises to the secreted. The enzyme catalyses Hydrolysis of proteins, including basement membrane collagen and azocasein. Preferential cleavage: Arg-Arg-|-Xaa in small molecule substrates including Z-Arg-Arg-|-NHMec.. Inhibited by cysteine protease inhibitors ICP1 and ICP2. Inhibited by leupeptin and such inhibitors of cysteine proteinases as L-transepoxysuccinyl-L-leucylamido-(4-guanidino)butane, peptidyldiazomethanes, iodoacetic acid and chicken cystatin. Cysteine protease which degrades matrix proteins such as collagen, laminin and fibronectin and thus is involved in the destruction of human tissue. Can abolish adhesion. May play an important role in pathogenicity. The polypeptide is Cysteine proteinase 2 (Entamoeba histolytica (strain ATCC 30459 / HM-1:IMSS / ABRM)).